We begin with the raw amino-acid sequence, 470 residues long: Sorting nexin-17 (470 aa).

A PX domain is found at 1–109 (MHFSIPETES…SFLRRAQQET (109 aa)). Residues R36, S38, K62, and R75 each contribute to the a 1,2-diacyl-sn-glycero-3-phospho-(1D-myo-inositol-3-phosphate) site. One can recognise a Ras-associating domain in the interval 115–206 (EEVSLEVLLS…YKIVLRKSYW (92 aa)). Residues 115 to 432 (EEVSLEVLLS…DASRESMVKL (318 aa)) are FERM-like. The tract at residues 270 to 432 (GYLRFDACVA…DASRESMVKL (163 aa)) is PTB-like F3 module. Residues 401–425 (GGNLRRSDSQQAVKSPPLLESPDAS) are disordered. Residues S407, S409, S415, S421, S437, and S440 each carry the phosphoserine modification.

It belongs to the sorting nexin family. As to quaternary structure, monomer. Interacts with APP (via cytoplasmic YXNPXY motif). Interacts with KIF1B. Interacts with the C-termini of P-selectin, PTC, LDLR, VLDLR, LRP1 and LRP8. Interacts with KRIT1 (via N-terminus). Interacts with HRAS. Interacts with ITGB1 and ITGB5 (via NPxY motif). Interacts with CCDC22 and CCDC93; the interaction associates SNX17 with the CCC complex. Interacts (via C-terminus) with VPS26C and VPS35L; the interactions are direct and associate SNX17 with the retriever complex.

The protein localises to the cytoplasm. The protein resides in the early endosome. It is found in the cytoplasmic vesicle membrane. In terms of biological role, critical regulator of endosomal recycling of numerous surface proteins, including integrins, signaling receptor and channels. Binds to NPxY sequences in the cytoplasmic tails of target cargos. Associates with retriever and CCC complexes to prevent lysosomal degradation and promote cell surface recycling of numerous cargos such as integrins ITGB1, ITGB5 and their associated alpha subunits. Also required for maintenance of normal cell surface levels of APP and LRP1. Interacts with membranes containing phosphatidylinositol 3-phosphate (PtdIns(3P)). This chain is Sorting nexin-17 (Snx17), found in Rattus norvegicus (Rat).